We begin with the raw amino-acid sequence, 489 residues long: Envelope glycoprotein C homolog (489 aa).

The first 32 residues, 1 to 32 (MVSNMRVLRVLRLTGWVGIFLVLSLQQTSCAG), serve as a signal peptide directing secretion. Residues 33–455 (LPHNVDTHHI…YYDATPSARG (423 aa)) are Virion surface-facing. Positions 59 to 94 (EVPNSPTTELSTTVATKTAVPTTESTSSSEAHRNSS) are disordered. The segment covering 60-69 (VPNSPTTELS) has biased composition (polar residues). A compositionally biased stretch (low complexity) spans 70–81 (TTVATKTAVPTT). 5 N-linked (GlcNAc...) asparagine; by host glycosylation sites follow: Asn92, Asn112, Asn204, Asn346, and Asn392. Positions 250–348 (PASVDVLAPP…GDMISTSNAT (99 aa)) constitute an Ig-like domain. Residues 456-486 (MPMIVTITAVLGLALFLGIGIIITALCFYLP) form a helical membrane-spanning segment. Topologically, residues 487-489 (GRN) are cytoplasmic.

This sequence belongs to the herpesviridae glycoprotein C family.

The protein localises to the virion membrane. This chain is Envelope glycoprotein C homolog (gC), found in Gallus gallus (Chicken).